The chain runs to 1298 residues: Phosphoribosylformylglycinamidine synthase (1298 aa).

A disordered region spans residues 303 to 327 (FPGAATGSGGEIRDEGATGRGAKPK). Residues 305-316 (GAATGSGGEIRD), 384-386 (TGY), and Ala676 each bind ATP. Mg(2+) contacts are provided by Asp677, Glu716, Asn720, and Asp884. Ser886 is an ATP binding site. The 254-residue stretch at 1045–1298 (VAVLREQGVN…MFRNARAWVN (254 aa)) folds into the Glutamine amidotransferase type-1 domain. Cys1138 functions as the Nucleophile in the catalytic mechanism. Residues His1263 and Glu1265 contribute to the active site.

It in the N-terminal section; belongs to the FGAMS family. As to quaternary structure, monomer.

The protein localises to the cytoplasm. It catalyses the reaction N(2)-formyl-N(1)-(5-phospho-beta-D-ribosyl)glycinamide + L-glutamine + ATP + H2O = 2-formamido-N(1)-(5-O-phospho-beta-D-ribosyl)acetamidine + L-glutamate + ADP + phosphate + H(+). The protein operates within purine metabolism; IMP biosynthesis via de novo pathway; 5-amino-1-(5-phospho-D-ribosyl)imidazole from N(2)-formyl-N(1)-(5-phospho-D-ribosyl)glycinamide: step 1/2. In terms of biological role, phosphoribosylformylglycinamidine synthase involved in the purines biosynthetic pathway. Catalyzes the ATP-dependent conversion of formylglycinamide ribonucleotide (FGAR) and glutamine to yield formylglycinamidine ribonucleotide (FGAM) and glutamate. The polypeptide is Phosphoribosylformylglycinamidine synthase (Pseudomonas syringae pv. tomato (strain ATCC BAA-871 / DC3000)).